Reading from the N-terminus, the 490-residue chain is MKNKNSGYDLVIFGAKGDLSCRKLLPSLYQLEKKNKLCTHTRIIGVGRANWDKIIYTNVVYKSLIKFLNETIIESIWKKFSSRLEFCNLDINCLHNFKKLKQIIQQNNNIIINYLAMPPHTFGNICLGLESINLNLEPTRIIIEKPLGSSLKTSININNKIGKFFKEKQIFRIDHYLGKETIQNLLAFRFSNSLFYYNWNNKFIDHVQITVSETIGVEGRFNYFDTVGQIKDMVQNHLLQILTITTMSTPIDCHENSIRDEKVKILKSLRPFNINNIHKNVILGQYTSGIINQKKVKSYLDETNNQEYQMNKYTETFVSMKIYIDNDQWSGVPFYLRTGKRLPKKCSEIVIFFKTPPLNIFSKNYNTLSKNKLILSLQPNEAIKIYILNKKPKLTSQYKLDLITLDFNYSKFYKKIQLSDAYEKLLLESMKGIQSLFVRRDEVELAWKWIDSTLQCLHLKPRLPDLYPAGTWGPARSKTMINNDGYEWNE.

NADP(+)-binding positions include arginine 48, 90 to 91 (DI), and lysine 145. Substrate-binding residues include histidine 175, lysine 179, glutamate 213, and aspartate 232. The active-site Proton acceptor is histidine 237. 2 residues coordinate substrate: lysine 340 and lysine 345.

This sequence belongs to the glucose-6-phosphate dehydrogenase family.

The catalysed reaction is D-glucose 6-phosphate + NADP(+) = 6-phospho-D-glucono-1,5-lactone + NADPH + H(+). It participates in carbohydrate degradation; pentose phosphate pathway; D-ribulose 5-phosphate from D-glucose 6-phosphate (oxidative stage): step 1/3. In terms of biological role, catalyzes the oxidation of glucose 6-phosphate to 6-phosphogluconolactone. The polypeptide is Glucose-6-phosphate 1-dehydrogenase (Buchnera aphidicola subsp. Baizongia pistaciae (strain Bp)).